We begin with the raw amino-acid sequence, 525 residues long: ESX-1 secretion-associated protein EspE (525 aa).

2 disordered regions span residues 244–341 (AVAG…PGAA) and 375–494 (ALQA…APVH). The span at 248 to 258 (DADDTTADDTA) shows a compositional bias: acidic residues. Residues 274-286 (ETSKEDGQSRHEN) show a composition bias toward basic and acidic residues. Over residues 292–306 (SGGGGGATSGGGGGA) the composition is skewed to gly residues. Low complexity-rich tracts occupy residues 307–319 (PSSA…AGTP), 332–341 (TPTDAQPGAA), and 375–397 (ALQA…AAAP). Basic and acidic residues predominate over residues 411-440 (DPDAEGDKDSDKRDGEGKEDGTAPRDREST).

Its subcellular location is the cytoplasm. The polypeptide is ESX-1 secretion-associated protein EspE (Mycolicibacterium smegmatis (strain ATCC 700084 / mc(2)155) (Mycobacterium smegmatis)).